Reading from the N-terminus, the 619-residue chain is Lateral signaling target protein 2 homolog (619 aa).

An FYVE-type zinc finger spans residues 501-561 (DSDCEQCTAC…VCNLCFLYKI (61 aa)). Residues cysteine 507, cysteine 510, cysteine 523, cysteine 526, cysteine 531, cysteine 534, cysteine 553, and cysteine 556 each coordinate Zn(2+). The tract at residues 598–619 (HERSQDGSQSNESPTATTATTI) is disordered. Positions 603–619 (DGSQSNESPTATTATTI) are enriched in polar residues.

The protein belongs to the lst-2 family.

Functionally, negative regulator of epidermal growth factor receptor (EGFR) signaling. The sequence is that of Lateral signaling target protein 2 homolog from Brugia malayi (Filarial nematode worm).